A 600-amino-acid polypeptide reads, in one-letter code: Methionine--tRNA ligase (600 aa).

A 'HIGH' region motif is present at residues 11-21 (PYANGPRHIGH). Residues Cys-143, Cys-146, Cys-156, and Cys-159 each contribute to the Zn(2+) site. Positions 351 to 355 (KFSSS) match the 'KMSKS' region motif. Residue Ser-354 coordinates ATP.

The protein belongs to the class-I aminoacyl-tRNA synthetase family. MetG type 1 subfamily. In terms of assembly, monomer. Zn(2+) serves as cofactor.

It is found in the cytoplasm. The catalysed reaction is tRNA(Met) + L-methionine + ATP = L-methionyl-tRNA(Met) + AMP + diphosphate. Its function is as follows. Is required not only for elongation of protein synthesis but also for the initiation of all mRNA translation through initiator tRNA(fMet) aminoacylation. The sequence is that of Methionine--tRNA ligase from Salinispora arenicola (strain CNS-205).